A 336-amino-acid chain; its full sequence is Aldo-keto reductase str7 (336 aa).

NADP(+) is bound at residue aspartate 57. The active-site Proton donor is the tyrosine 62. Histidine 124 is a substrate binding site. NADP(+)-binding positions include 154–155 (SE), glutamine 174, 206–220 (SPLGRGLLTGQYKSP), and 283–291 (KKIKYLEEN).

This sequence belongs to the aldo/keto reductase family. Aldo/keto reductase 2 subfamily.

It participates in mycotoxin biosynthesis. Aldo-keto reductase; part of the gene cluster that mediates the biosynthesis of strobilurin A, an antifungal polyketide that contains a key beta-methoxyacrylate toxophore that targets the complex III of the mitochondrial electron transport chain. Strobilurin biosynthesis begins with construction of benzoyl CoA by step-wise elimination of ammonia from phenylalanine by the phenylalanine ammonia-lyase str11, oxygenation by str8 and retro-Claisen reaction to form benzoic acid, which is activated to its CoA thiolester benzoyl CoA by the dedicated CoA ligase str10. Benzoyl CoA forms the starter unit for the highly reducing polyketide synthase stpks1 that produces the polyketide prestrobilutin A. The FAD-dependent oxygenase str9 then catalyzes the key oxidative rearrangement responsible for the creation of the beta-methoxyacrylate toxophore. Str9 performs epoxidation of the 2,3 olefin of prestrobilutin A, followed by Meinwald rearrangement to furnish the aldehyde intermediate. Rapid enolization of the aldehyde intermediate would give the beta-methoxyacrylate skeleton and methylations catalyzed by str2 and str3 complete the synthesis and lead to the production of strobilurin A. The short-chain dehydrogenase stl2 and the dehydrogenase str4 play a role in the shunt pathway leading to the production of bolineol. The cluster encodes no obvious halogenase gene that could be involved in production of strobilurin B, nor any obvious dimethylallyl-transferase that could be involved in the production of strobilurin G. It is possible that unknown proteins encoded in, or near, the cluster (such as str1 or stl1) may form new classes of halogenases or dimethylally-transferases, or that the responsible genes are located elsewhere on the genome. Similarly, proteins encoded by str5/str6 hydrolases appear to have no chemical role in the biosynthesis of strobilurin A. Finally, no obvious self-resistance gene is found within the cluster. The sequence is that of Aldo-keto reductase str7 from Strobilurus tenacellus.